The following is an 84-amino-acid chain: MPIIKSAIERVRVNEKAAARNASQMSAMRTAIKKFDKAKLAGADNLDDLYKAAISAIDHAHSKGLIKANKAARDKSRLSARYAK.

This sequence belongs to the bacterial ribosomal protein bS20 family.

Functionally, binds directly to 16S ribosomal RNA. This chain is Small ribosomal subunit protein bS20, found in Limosilactobacillus fermentum (strain NBRC 3956 / LMG 18251) (Lactobacillus fermentum).